Here is a 199-residue protein sequence, read N- to C-terminus: MSDFQKSFSESTNSIKFDDKYRDNSVQPDDIGVANQWAVKTVADPCVGNLATPVNSGYFTKAFINNLPFYREGISPNFRGLETGAAFGYLLYGPFTMTGPLRNSDFAITAGLLAAIGAVHIMTALLVLYNAPGKAPNVQPPDATVNNPPADLFTRAGWADFTSGFWLGGCGGAVFAWLLVGTLHLDTIMPIIKNIWTAG.

The next 2 membrane-spanning stretches (helical) occupy residues 108–128 (ITAG…LLVL) and 165–185 (FWLG…TLHL).

It belongs to the PsaL family.

Its subcellular location is the cellular thylakoid membrane. The polypeptide is Photosystem I reaction center subunit XI (Prochlorococcus marinus (strain MIT 9515)).